Reading from the N-terminus, the 242-residue chain is Lactate utilization protein A 2 (242 aa).

The protein belongs to the LutA/YkgE family.

Is involved in L-lactate degradation and allows cells to grow with lactate as the sole carbon source. This Bacillus cereus (strain ZK / E33L) protein is Lactate utilization protein A 2.